A 334-amino-acid polypeptide reads, in one-letter code: MLYSLARPMLFSLAPERAHELTLSMLDKAHKLGMMRQTVEAKPTTCMGIEFPNPVGLAAGLDKNGAHIDALAGLGFGFIEIGTITPRPQSGNPKPRLFRIPEAKAIINRMGFNNDGVDKLIENVKASKFRGILGINIGKNADTPVEKAVDDYLICLEKVYNYASYITVNISSPNTKNLRSLQSGDALTELLQTLKARQLELAEQYNHYVPLVLKVAPDLTAEDVEFISAQLLDFKIDGLIVTNTTLSREGVENLPYGNESGGLSGAPVFEKSTECLRLFAQTLKGQIPLIGVGGILSGEQAAAKQQAGATLVQIYSGLIYTGPTLVKQCVEAMT.

Residues 59–63 (AGLDK) and Thr83 each bind FMN. Lys63 lines the substrate pocket. 108 to 112 (NRMGF) lines the substrate pocket. Residues Asn136 and Asn169 each coordinate FMN. Asn169 is a binding site for substrate. Ser172 (nucleophile) is an active-site residue. Residue Asn174 participates in substrate binding. FMN contacts are provided by Lys214 and Thr242. 243–244 (NT) provides a ligand contact to substrate. FMN-binding positions include Gly265, Gly294, and 315 to 316 (YS).

The protein belongs to the dihydroorotate dehydrogenase family. Type 2 subfamily. As to quaternary structure, monomer. The cofactor is FMN.

The protein localises to the cell membrane. It carries out the reaction (S)-dihydroorotate + a quinone = orotate + a quinol. The protein operates within pyrimidine metabolism; UMP biosynthesis via de novo pathway; orotate from (S)-dihydroorotate (quinone route): step 1/1. Functionally, catalyzes the conversion of dihydroorotate to orotate with quinone as electron acceptor. In Acinetobacter baumannii (strain AB0057), this protein is Dihydroorotate dehydrogenase (quinone).